The primary structure comprises 244 residues: NAD(P)H-hydrate epimerase (244 aa).

Positions 35–240 (IREIDSLAME…SIGVPLELLR (206 aa)) constitute a YjeF N-terminal domain. Residue 82–86 (NNGGD) participates in (6S)-NADPHX binding. Residues asparagine 83 and aspartate 150 each contribute to the K(+) site. (6S)-NADPHX-binding positions include 154 to 160 (GTGAKPP), tyrosine 165, and aspartate 183. Threonine 186 provides a ligand contact to K(+).

Belongs to the NnrE/AIBP family. K(+) serves as cofactor.

It catalyses the reaction (6R)-NADHX = (6S)-NADHX. The catalysed reaction is (6R)-NADPHX = (6S)-NADPHX. Catalyzes the epimerization of the S- and R-forms of NAD(P)HX, a damaged form of NAD(P)H that is a result of enzymatic or heat-dependent hydration. This is a prerequisite for the S-specific NAD(P)H-hydrate dehydratase to allow the repair of both epimers of NAD(P)HX. The polypeptide is NAD(P)H-hydrate epimerase (Rhodopirellula baltica (strain DSM 10527 / NCIMB 13988 / SH1)).